A 279-amino-acid polypeptide reads, in one-letter code: Ribosome maturation factor RimP (279 aa).

A disordered region spans residues 197 to 279 (LAEEGEPEEQ…GAPALRPTPK (83 aa)). The span at 199 to 210 (EEGEPEEQEEGG) shows a compositional bias: acidic residues.

The protein belongs to the RimP family.

It is found in the cytoplasm. Required for maturation of 30S ribosomal subunits. In Methylocella silvestris (strain DSM 15510 / CIP 108128 / LMG 27833 / NCIMB 13906 / BL2), this protein is Ribosome maturation factor RimP.